The sequence spans 93 residues: Large ribosomal subunit protein uL23cz/uL23cy (93 aa).

This sequence belongs to the universal ribosomal protein uL23 family. In terms of assembly, part of the 50S ribosomal subunit.

It localises to the plastid. The protein resides in the chloroplast. Its function is as follows. Binds to 23S rRNA. In Lactuca sativa (Garden lettuce), this protein is Large ribosomal subunit protein uL23cz/uL23cy (rpl23-A).